Here is a 366-residue protein sequence, read N- to C-terminus: NADP-dependent oxidoreductase domain-containing protein 1 (366 aa).

This sequence belongs to the pyrroline-5-carboxylate reductase family.

Its function is as follows. Probable oxidoreductase. The chain is NADP-dependent oxidoreductase domain-containing protein 1 (Noxred1) from Mus musculus (Mouse).